The chain runs to 448 residues: Glucose-6-phosphate isomerase (448 aa).

E291 acts as the Proton donor in catalysis. Residues H312 and K425 contribute to the active site.

Belongs to the GPI family.

The protein localises to the cytoplasm. It carries out the reaction alpha-D-glucose 6-phosphate = beta-D-fructose 6-phosphate. The protein operates within carbohydrate biosynthesis; gluconeogenesis. It functions in the pathway carbohydrate degradation; glycolysis; D-glyceraldehyde 3-phosphate and glycerone phosphate from D-glucose: step 2/4. Catalyzes the reversible isomerization of glucose-6-phosphate to fructose-6-phosphate. In Symbiobacterium thermophilum (strain DSM 24528 / JCM 14929 / IAM 14863 / T), this protein is Glucose-6-phosphate isomerase.